Reading from the N-terminus, the 285-residue chain is Orotidine 5'-phosphate decarboxylase (285 aa).

Residues D40, 62–64 (KTH), 93–102 (DRKFVDIGST), Y235, and R253 each bind substrate. K95 serves as the catalytic Proton donor.

It belongs to the OMP decarboxylase family.

It carries out the reaction orotidine 5'-phosphate + H(+) = UMP + CO2. It participates in pyrimidine metabolism; UMP biosynthesis via de novo pathway; UMP from orotate: step 2/2. The protein is Orotidine 5'-phosphate decarboxylase (URA3) of Paracoccidioides brasiliensis.